The sequence spans 274 residues: MPFRSNNPLTRDELLSRFFPQFHPVTTFNSGLSGGSFLIEHQGQRFVVRQPHDPDAPQSAFLRQYRALSQLPACIAPKPHLYLRDWMVVDYLPGEVKTYLPDTNELAGLLYYLHQQPRFGWRITLLPLLELYWQQSDPARRTVGWLRRLKRLHKAREPRPLRLSPLHMDVHAGNLVHSASGLKLIDWEYAGDGDIALELAAVWVENTDQHRQLVNDYATRAKIYPAQLWRQVRRWFPWLLMLKAGWFEYRWRQTGDQQFIRLADDTWRQLLIKQ.

It belongs to the thiamine kinase family.

It catalyses the reaction thiamine + ATP = thiamine phosphate + ADP + H(+). The protein operates within cofactor biosynthesis; thiamine diphosphate biosynthesis; thiamine phosphate from thiamine: step 1/1. Functionally, catalyzes the ATP-dependent phosphorylation of thiamine to thiamine phosphate. Is involved in thiamine salvage. In Escherichia coli (strain SMS-3-5 / SECEC), this protein is Thiamine kinase.